The chain runs to 89 residues: Small ribosomal subunit protein uS15 (89 aa).

It belongs to the universal ribosomal protein uS15 family. Part of the 30S ribosomal subunit. Forms a bridge to the 50S subunit in the 70S ribosome, contacting the 23S rRNA.

One of the primary rRNA binding proteins, it binds directly to 16S rRNA where it helps nucleate assembly of the platform of the 30S subunit by binding and bridging several RNA helices of the 16S rRNA. Functionally, forms an intersubunit bridge (bridge B4) with the 23S rRNA of the 50S subunit in the ribosome. This is Small ribosomal subunit protein uS15 from Nostoc punctiforme (strain ATCC 29133 / PCC 73102).